Here is a 434-residue protein sequence, read N- to C-terminus: Eukaryotic translation initiation factor 3 subunit E-2 (434 aa).

A PCI domain is found at 219-392 (FFNHPKGRDL…GHVVMGTQPL (174 aa)).

Belongs to the eIF-3 subunit E family. In terms of assembly, component of the eukaryotic translation initiation factor 3 (eIF-3) complex. The eIF-3 complex interacts with pix. Interacts with mxt.

It localises to the cytoplasm. In terms of biological role, component of the eukaryotic translation initiation factor 3 (eIF-3) complex, which is involved in protein synthesis of a specialized repertoire of mRNAs and, together with other initiation factors, stimulates binding of mRNA and methionyl-tRNAi to the 40S ribosome. The eIF-3 complex specifically targets and initiates translation of a subset of mRNAs involved in cell proliferation. The polypeptide is Eukaryotic translation initiation factor 3 subunit E-2 (eIF3-S6-2) (Drosophila willistoni (Fruit fly)).